A 463-amino-acid chain; its full sequence is ATP-dependent protease ATPase subunit HslU (463 aa).

Residues I19, 61–66 (GVGKTE), D277, E341, and R413 contribute to the ATP site.

The protein belongs to the ClpX chaperone family. HslU subfamily. As to quaternary structure, a double ring-shaped homohexamer of HslV is capped on each side by a ring-shaped HslU homohexamer. The assembly of the HslU/HslV complex is dependent on binding of ATP.

The protein localises to the cytoplasm. ATPase subunit of a proteasome-like degradation complex; this subunit has chaperone activity. The binding of ATP and its subsequent hydrolysis by HslU are essential for unfolding of protein substrates subsequently hydrolyzed by HslV. HslU recognizes the N-terminal part of its protein substrates and unfolds these before they are guided to HslV for hydrolysis. In Bacillus cereus (strain AH187), this protein is ATP-dependent protease ATPase subunit HslU.